We begin with the raw amino-acid sequence, 243 residues long: Uridine-cytidine kinase B (243 aa).

Residue 22-29 (GGTASGKT) coordinates ATP.

The protein belongs to the uridine kinase family.

It carries out the reaction uridine + ATP = UMP + ADP + H(+). The catalysed reaction is cytidine + ATP = CMP + ADP + H(+). The protein operates within pyrimidine metabolism; CTP biosynthesis via salvage pathway; CTP from cytidine: step 1/3. It participates in pyrimidine metabolism; UMP biosynthesis via salvage pathway; UMP from uridine: step 1/1. In terms of biological role, catalyzes the conversion of uridine into uridine monophosphate and cytidine into cytidine monophosphate in the pyrimidine salvage pathway. In Dictyostelium discoideum (Social amoeba), this protein is Uridine-cytidine kinase B (udkB).